The chain runs to 285 residues: Seipin (285 aa).

Topologically, residues 1–16 are cytoplasmic; the sequence is MKINVSRPLQFLQWSS. The helical transmembrane segment at 17 to 37 threads the bilayer; the sequence is YIVVAFLIQLLIILPLSILIY. Topologically, residues 38 to 244 are lumenal; it reads HDFYLRLLPA…GLRNLMLRKR (207 aa). A helical membrane pass occupies residues 245–265; that stretch reads FLSYIIGISIFHCIICVLFFI. The Cytoplasmic segment spans residues 266-285; that stretch reads TGCTAFIFVRKGQEKSKKHS.

It belongs to the seipin family.

It localises to the endoplasmic reticulum membrane. Its function is as follows. Involved in lipid metabolism and lipid droplet (LD) morphology, number, and size. Facilitates initiation of LD formation, and ensures that vectorial budding of LDs from the ER is directed towards the cytoplasm. This is Seipin from Saccharomyces cerevisiae (strain ATCC 204508 / S288c) (Baker's yeast).